The sequence spans 489 residues: Glutamyl-tRNA(Gln) amidotransferase subunit A (489 aa).

Active-site charge relay system residues include K77 and S152. S176 (acyl-ester intermediate) is an active-site residue.

This sequence belongs to the amidase family. GatA subfamily. Heterotrimer of A, B and C subunits.

It catalyses the reaction L-glutamyl-tRNA(Gln) + L-glutamine + ATP + H2O = L-glutaminyl-tRNA(Gln) + L-glutamate + ADP + phosphate + H(+). Allows the formation of correctly charged Gln-tRNA(Gln) through the transamidation of misacylated Glu-tRNA(Gln) in organisms which lack glutaminyl-tRNA synthetase. The reaction takes place in the presence of glutamine and ATP through an activated gamma-phospho-Glu-tRNA(Gln). This chain is Glutamyl-tRNA(Gln) amidotransferase subunit A, found in Levilactobacillus brevis (strain ATCC 367 / BCRC 12310 / CIP 105137 / JCM 1170 / LMG 11437 / NCIMB 947 / NCTC 947) (Lactobacillus brevis).